Here is a 245-residue protein sequence, read N- to C-terminus: Carbohydrate deacetylase (245 aa).

Residues H61 and H122 each coordinate Mg(2+).

It belongs to the YdjC deacetylase family. It depends on Mg(2+) as a cofactor.

Its function is as follows. Probably catalyzes the deacetylation of acetylated carbohydrates an important step in the degradation of oligosaccharides. This Geobacillus stearothermophilus (Bacillus stearothermophilus) protein is Carbohydrate deacetylase (celC).